The sequence spans 400 residues: Zinc finger CCHC domain-containing protein 3 (400 aa).

A disordered region spans residues 1-157 (MATGGGAEEE…LQDEPPAAGP (157 aa)). Composition is skewed to basic and acidic residues over residues 26-38 (ARVE…REKM) and 47-63 (LAEK…RDET). A compositionally biased stretch (gly residues) spans 66–75 (GASGGLGSPG). The span at 91 to 109 (GDPKGRRRDPTGEASDAYR) shows a compositional bias: basic and acidic residues. Position 198 is a phosphotyrosine (Y198). 2 consecutive CCHC-type zinc fingers follow at residues 349–365 (RCFR…YCRK) and 369–384 (CNLC…QCPK).

In terms of assembly, interacts with CGAS. Interacts with RIGI. Interacts with IFIH1/MDA5.

The protein localises to the cytoplasm. Nucleic acid-binding protein involved in innate immune response to DNA and RNA viruses. Binds DNA and RNA in the cytoplasm and acts by promoting recognition of viral nucleic acids by virus sensors, such as RIGI, IFIH1/MDA5 and CGAS. Acts as a co-sensor for recognition of double-stranded DNA (dsDNA) by cGAS in the cytoplasm, thereby playing a role in innate immune response to cytosolic dsDNA and DNA virus. Binds dsDNA and probably acts by promoting sensing of dsDNA by CGAS, leading to enhance CGAS oligomerization and activation. Promotes sensing of viral RNA by RIG-I-like receptors proteins RIGI and IFIH1/MDA5 via two mechanisms: binds double-stranded RNA (dsRNA), enhancing the binding of RIGI and IFIH1/MDA5 to dsRNA and promotes 'Lys-63'-linked ubiquitination and subsequent activation of RIGI and IFIH1/MDA5. The sequence is that of Zinc finger CCHC domain-containing protein 3 from Mus musculus (Mouse).